We begin with the raw amino-acid sequence, 115 residues long: Large ribosomal subunit protein bL20 (115 aa).

The protein belongs to the bacterial ribosomal protein bL20 family.

Binds directly to 23S ribosomal RNA and is necessary for the in vitro assembly process of the 50S ribosomal subunit. It is not involved in the protein synthesizing functions of that subunit. In Synechococcus sp. (strain CC9605), this protein is Large ribosomal subunit protein bL20.